Consider the following 289-residue polypeptide: 4-hydroxy-tetrahydrodipicolinate synthase (289 aa).

Threonine 45 provides a ligand contact to pyruvate. Residue tyrosine 133 is the Proton donor/acceptor of the active site. Lysine 161 acts as the Schiff-base intermediate with substrate in catalysis. Isoleucine 200 contributes to the pyruvate binding site.

Belongs to the DapA family. In terms of assembly, homotetramer; dimer of dimers.

Its subcellular location is the cytoplasm. It catalyses the reaction L-aspartate 4-semialdehyde + pyruvate = (2S,4S)-4-hydroxy-2,3,4,5-tetrahydrodipicolinate + H2O + H(+). Its pathway is amino-acid biosynthesis; L-lysine biosynthesis via DAP pathway; (S)-tetrahydrodipicolinate from L-aspartate: step 3/4. In terms of biological role, catalyzes the condensation of (S)-aspartate-beta-semialdehyde [(S)-ASA] and pyruvate to 4-hydroxy-tetrahydrodipicolinate (HTPA). The chain is 4-hydroxy-tetrahydrodipicolinate synthase from Coxiella burnetii (strain Dugway 5J108-111).